The chain runs to 272 residues: 4-hydroxy-tetrahydrodipicolinate reductase (272 aa).

12–17 is an NAD(+) binding site; the sequence is GALGKM. Residue K39 coordinates NADP(+). NAD(+) is bound by residues 102–104 and 126–129; these read GTT and SSNY. The active-site Proton donor/acceptor is H159. H160 provides a ligand contact to (S)-2,3,4,5-tetrahydrodipicolinate. Residue K163 is the Proton donor of the active site. Residue 169–170 participates in (S)-2,3,4,5-tetrahydrodipicolinate binding; sequence GT.

It belongs to the DapB family. As to quaternary structure, homotetramer.

It is found in the cytoplasm. The enzyme catalyses (S)-2,3,4,5-tetrahydrodipicolinate + NAD(+) + H2O = (2S,4S)-4-hydroxy-2,3,4,5-tetrahydrodipicolinate + NADH + H(+). It carries out the reaction (S)-2,3,4,5-tetrahydrodipicolinate + NADP(+) + H2O = (2S,4S)-4-hydroxy-2,3,4,5-tetrahydrodipicolinate + NADPH + H(+). It participates in amino-acid biosynthesis; L-lysine biosynthesis via DAP pathway; (S)-tetrahydrodipicolinate from L-aspartate: step 4/4. In terms of biological role, catalyzes the conversion of 4-hydroxy-tetrahydrodipicolinate (HTPA) to tetrahydrodipicolinate. This chain is 4-hydroxy-tetrahydrodipicolinate reductase, found in Buchnera aphidicola subsp. Baizongia pistaciae (strain Bp).